The following is a 755-amino-acid chain: Transcription factor kayak, isoforms A/B/F (755 aa).

2 stretches are compositionally biased toward low complexity: residues 23–66 (FAQQ…LPTQ) and 149–159 (QQHYPSESQSS). Disordered stretches follow at residues 23–75 (FAQQ…SQSV), 149–168 (QQHY…PETP), 316–350 (LGQG…HTDS), and 383–440 (GSAS…KRRV). A compositionally biased stretch (polar residues) spans 316–333 (LGQGSESEDSNASYNDTQ). 2 stretches are compositionally biased toward low complexity: residues 341-350 (TDTSSAHTDS) and 383-397 (GSAS…TSNT). The 64-residue stretch at 418-481 (EQKRAVRRER…NQLEYLLATH (64 aa)) folds into the bZIP domain. Positions 420 to 439 (KRAVRRERNKQAAARCRKRR) are basic motif. The segment at 446 to 453 (LTEEVEQL) is leucine-zipper. Residues 510-531 (AGSSGSGASSHHNHNSNDSSNG) are compositionally biased toward low complexity. Disordered regions lie at residues 510–552 (AGSS…PLDL) and 716–755 (DGGT…LVSL). Over residues 539–549 (TLNSTGRSNSP) the composition is skewed to polar residues. Ser-548 carries the post-translational modification Phosphoserine.

The protein belongs to the bZIP family. Fos subfamily. Homodimer. Heterodimer with Jra. The kay-Jra heterodimer binds more stably to the AP-1 site than either of the two proteins alone. As to expression, early expression in the embryo is mesodermal and some of this expression is localized to a region surrounding the cephalic furrow. Later in embryonic development expression is ectodermal, corresponding to muscle attachment sites. Also observed in part of the mid- and hindgut and in the anal pad.

Its subcellular location is the nucleus. Functionally, developmentally regulated transcription factor AP-1 binds and recognizes the enhancer DNA sequence: 5'-TGA[CG]TCA-3'. May play a role in the function or determination of a particular subset of cells in the developing embryo. It is able to carry out its function either independently of or in conjunction with Jra. This chain is Transcription factor kayak, isoforms A/B/F (kay), found in Drosophila melanogaster (Fruit fly).